The following is a 215-amino-acid chain: LexA repressor (215 aa).

Residues 28 to 48 (RAEIAAELGFSSPNAAEEHLR) constitute a DNA-binding region (H-T-H motif). Active-site for autocatalytic cleavage activity residues include Ser133 and Lys170.

It belongs to the peptidase S24 family. In terms of assembly, homodimer.

It catalyses the reaction Hydrolysis of Ala-|-Gly bond in repressor LexA.. In terms of biological role, represses a number of genes involved in the response to DNA damage (SOS response), including recA and lexA. In the presence of single-stranded DNA, RecA interacts with LexA causing an autocatalytic cleavage which disrupts the DNA-binding part of LexA, leading to derepression of the SOS regulon and eventually DNA repair. The polypeptide is LexA repressor (Burkholderia vietnamiensis (strain G4 / LMG 22486) (Burkholderia cepacia (strain R1808))).